A 194-amino-acid polypeptide reads, in one-letter code: Ion-translocating oxidoreductase complex subunit B (194 aa).

A hydrophobic region spans residues 1 to 26 (MSGVLIAVAALLALAAVFGAVLGFAS). A 4Fe-4S domain is found at 32–90 (EGDPIVDQIDSLLPQTQCGQCGHPGCRPYAEAIAEGEEHNRCPPGGQDTVVALSELLGR). 12 residues coordinate [4Fe-4S] cluster: Cys49, Cys52, Cys57, Cys73, Cys116, Cys119, Cys122, Cys126, Cys146, Cys149, Cys152, and Cys156. 4Fe-4S ferredoxin-type domains lie at 107–136 (KVAY…GAAK) and 137–166 (LMHT…MLEV).

It belongs to the 4Fe4S bacterial-type ferredoxin family. RnfB subfamily. In terms of assembly, the complex is composed of six subunits: RnfA, RnfB, RnfC, RnfD, RnfE and RnfG. The cofactor is [4Fe-4S] cluster.

It localises to the cell inner membrane. Part of a membrane-bound complex that couples electron transfer with translocation of ions across the membrane. This Alcanivorax borkumensis (strain ATCC 700651 / DSM 11573 / NCIMB 13689 / SK2) protein is Ion-translocating oxidoreductase complex subunit B.